The chain runs to 266 residues: Type 1 encapsulin shell protein (266 aa).

Belongs to the encapsulin family. Family 1 subfamily. In terms of assembly, this encapsulin nanocompartment is formed by 60 subunits; monomers form 12 pentamers which assemble to form shells. Shells are loaded with 4 encapsulated ferritin-like protein decamers (EncFtn) in a tetrahedral arrangement. A 3 nm gap is consistently seen between the shell and the cargo.

The protein localises to the encapsulin nanocompartment. Shell component of a type 1 encapsulin nanocompartment. Assembles into proteinaceous shells about 21 nm in diameter. Small pores form at, or close to, the 2-, 3-, and 5-fold symmetry axes. Data analysis suggests the 5-fold pores open and close with maximal and minimal aperatures of 15 and 5 Angstroms. Cargo protein Fer (ferritin-like protein, probably stores iron) is targeted to the interior via its C-terminal extension; empty intact shells can be isolated in the absence of cargo protein. In Haliangium ochraceum (strain DSM 14365 / JCM 11303 / SMP-2), this protein is Type 1 encapsulin shell protein.